Here is a 1491-residue protein sequence, read N- to C-terminus: Membrane-associated guanylate kinase, WW and PDZ domain-containing protein 1 (1491 aa).

In terms of domain architecture, PDZ 1 spans 17–105; sequence ECTVKRGPQG…AVTFKAVRQG (89 aa). The Guanylate kinase-like domain occupies 96-287; the sequence is AVTFKAVRQG…APITDPSQKF (192 aa). 103–110 is an ATP binding site; that stretch reads RQGGRLNK. Positions 236-267 are disordered; it reads AENEEEDDVPEMNSSFTADSGEQEEHTLQETA. Residues 300 to 333 form the WW 1 domain; sequence GPLPENWEMAYTENGEVYFIDHNTKTTSWLDPRC. Residue Ser-357 is modified to Phosphoserine. One can recognise a WW 2 domain in the interval 359–392; sequence LELPAGWEKIEDPVYGIYYVDHINRKTQYENPVL. Low complexity predominate over residues 411 to 421; the sequence is QQQQQQQQQQQ. The segment at 411-462 is disordered; that stretch reads QQQQQQQQQQQTEEWTEDHSALVPPVIPNHPPSNPEPAREVPLQGKPFFTRN. Residues 435-445 show a composition bias toward pro residues; sequence PVIPNHPPSNP. The PDZ 2 domain occupies 472-554; sequence HTKLRKSSRG…GASVDLELCR (83 aa). A compositionally biased stretch (polar residues) spans 586 to 600; the sequence is QETYDSPASHSSKTG. 3 disordered regions span residues 586–623, 720–832, and 932–987; these read QETY…SSHG, QRGG…FGEC, and TENE…GGGS. A PDZ 3 domain is found at 643–721; sequence TVHIVKGPMG…GSEVTLLVQR (79 aa). Phosphoserine occurs at positions 730 and 741. Over residues 742–752 the composition is skewed to low complexity; that stretch reads QNSSQHSVSSH. A compositionally biased stretch (polar residues) spans 756–766; that stretch reads HTASPSHSTQV. Ser-800 is modified (phosphoserine). A PDZ 4 domain is found at 813–895; that stretch reads SGLSKGERER…DELICVDGTP (83 aa). The span at 939 to 951 shows a compositional bias: polar residues; sequence PASSHHSSNQPAS. The PDZ 5 domain occupies 970-1066; it reads SSGSGSTSGI…DRILAVNGCS (97 aa). An interaction with FCHSD2 region spans residues 970-1066; that stretch reads SSGSGSTSGI…DRILAVNGCS (97 aa). Residues 975-987 are compositionally biased toward gly residues; sequence STSGIGSGGGGGS. Phosphoserine is present on Ser-1071. The span at 1112–1130 shows a compositional bias: polar residues; it reads TTTHTPSQQGTQETRNTTK. Disordered regions lie at residues 1112–1143 and 1234–1491; these read TTTH…KAPQ and DGSV…DLSI. The 83-residue stretch at 1124 to 1206 folds into the PDZ 6 domain; sequence ETRNTTKPKQ…DEILEINGET (83 aa). Basic and acidic residues-rich tracts occupy residues 1278–1338, 1354–1396, and 1403–1491; these read DLHK…DAQA, KRRE…DGSP, and LERL…DLSI. Phosphoserine occurs at positions 1361 and 1412.

As to quaternary structure, part of a complex composed of AMOTL2, MAGI1 and CDH5, within the complex AMOTL2 acts as a scaffold protein for the interaction of MAGI1 with CDH5. The complex is required for coupling actin fibers to cell junctions in endothelial cells. Interacts through its WW 2 domain with SYNPO and through its PDZ 5 domain with ACTN4. Interacts with cytoplasmic domain of ADGRB1. Interacts via its WW domains with DRPLA. Interacts with ESAM, LRP2 and CXADR. May interact with CTNNB1. Interacts through its PDZ 1 domain with NET1. Interacts with ASIC3 and AMOT. Interacts with FCHSD2. Interacts with IGSF5/JAM4 and through its PDZ 2 and 3 domains with NPHS1 forming a tripartite complex. Interacts with DDN. Interacts with DLL1. Interacts with KCNJ10 and possibly with KCNJ10/KCNJ16 heterodimer; this interaction may facilitate KCNJ10/KCNJ16 potassium channel expression at the basolateral membrane in kidney tubular cells. Interacts with PRRG4 (via cytoplasmic domain). Interacts (via PDZ domain) with RAPGEF2. In terms of tissue distribution, widely expressed with the exception of skeletal muscle. Isoform 1, isoform 2 and isoform 6 are highly expressed in colon, kidney, lung, liver, and pancreas. Isoform 5 is predominantly expressed in brain and heart. Isoform 3 and isoform 4 are highly expressed in pancreas and brain.

The protein localises to the cell junction. The protein resides in the tight junction. It localises to the cell membrane. Plays a role in coupling actin fibers to cell junctions in endothelial cells, via its interaction with AMOTL2 and CDH5. May regulate acid-induced ASIC3 currents by modulating its expression at the cell surface. This chain is Membrane-associated guanylate kinase, WW and PDZ domain-containing protein 1 (MAGI1), found in Homo sapiens (Human).